Consider the following 160-residue polypeptide: MNAVDLIVEDDAWSSLAGKTRLVEEAISAACKELPDRTPGVVAILLGGDEGVASMNAQFRGKAGATNVLSFPAGEHADNHLGDIALAHGVIQREAEDRDIALADHLRHLIIHGFLHLQGFDHQQDDEAEVMEAIERRALARLGVADPYPNEDPGPGPHSE.

Residues histidine 112, histidine 116, and histidine 122 each coordinate Zn(2+).

It belongs to the endoribonuclease YbeY family. The cofactor is Zn(2+).

The protein resides in the cytoplasm. In terms of biological role, single strand-specific metallo-endoribonuclease involved in late-stage 70S ribosome quality control and in maturation of the 3' terminus of the 16S rRNA. This Maricaulis maris (strain MCS10) (Caulobacter maris) protein is Endoribonuclease YbeY.